We begin with the raw amino-acid sequence, 125 residues long: RxLR effector protein Avh6 (125 aa).

The signal sequence occupies residues 1 to 25 (MRLSSTTFVVLAAVLLASGTAVSKA). A RxLR-dEER motif is present at residues 48 to 70 (RFLRSHHTEDGKAKLSNYDNEER).

This sequence belongs to the RxLR effector family.

The protein localises to the secreted. The protein resides in the host cell. In terms of biological role, effector that suppresses plant defense responses during the early stages of pathogen infection. Suppresses cell death induced by effectors and PAMPs in plant hosts. Triggers a hypersensitive response (HR) in the presence of Rps1d. Suppresses BAX-induced cell death and enhanced P.capsici infection in Nicotiana benthamiana. Also suppresses effector-triggered immunity induction by associating with Avr1b and Rps1b, suggesting a role in suppressing plant immunity. The polypeptide is RxLR effector protein Avh6 (Phytophthora sojae (Soybean stem and root rot agent)).